Reading from the N-terminus, the 357-residue chain is Cytoplasmic tRNA 2-thiolation protein 1 (357 aa).

Residues 314-348 (GVSRTRGRRGEKAGLHPDVGRGGGGGSSGPAEVAS) form a disordered region. The span at 321 to 332 (RRGEKAGLHPDV) shows a compositional bias: basic and acidic residues.

This sequence belongs to the TtcA family. CTU1/NCS6/ATPBD3 subfamily.

It localises to the cytoplasm. The protein operates within tRNA modification; 5-methoxycarbonylmethyl-2-thiouridine-tRNA biosynthesis. Functionally, plays a central role in 2-thiolation of mcm(5)S(2)U at tRNA wobble positions of tRNA(Lys), tRNA(Glu) and tRNA(Gln). Directly binds tRNAs and probably acts by catalyzing adenylation of tRNAs, an intermediate required for 2-thiolation. It is unclear whether it acts as a sulfurtransferase that transfers sulfur from thiocarboxylated URM1 onto the uridine of tRNAs at wobble position. The protein is Cytoplasmic tRNA 2-thiolation protein 1 of Chlamydomonas reinhardtii (Chlamydomonas smithii).